We begin with the raw amino-acid sequence, 547 residues long: Glucose-6-phosphate isomerase (547 aa).

Glu-355 functions as the Proton donor in the catalytic mechanism. Residues His-386 and Lys-512 contribute to the active site.

Belongs to the GPI family.

The protein resides in the cytoplasm. The catalysed reaction is alpha-D-glucose 6-phosphate = beta-D-fructose 6-phosphate. It participates in carbohydrate biosynthesis; gluconeogenesis. The protein operates within carbohydrate degradation; glycolysis; D-glyceraldehyde 3-phosphate and glycerone phosphate from D-glucose: step 2/4. Catalyzes the reversible isomerization of glucose-6-phosphate to fructose-6-phosphate. This chain is Glucose-6-phosphate isomerase, found in Corynebacterium diphtheriae (strain ATCC 700971 / NCTC 13129 / Biotype gravis).